We begin with the raw amino-acid sequence, 643 residues long: MNANPKFLSADAHVDAAAVAPLPNSRKVYVTGSQPDIRVPMREITQADTPTGFGGEKNPPIYVYDTSGPYTDPDAKIDIRAGLPALRQGWIEARGDTEVLPGLSSQYGLERAADPATADLRFPGLHRHPRRAQPGKNVTQMHYARQGIITPEMEYIAIRENQRRAEYIESLKSSGPNGAKLAAMMGRQHPGQAFGAAAFGANALAEITPEFVRDEVARGRAIIPANINHPESEPMIIGRNFLVKINANIGNSAVTSSIGEEVDKMTWAIRWGGDTVMDLSTGKHIHETREWIIRNSPVPIGTVPIYQALEKVNGKAEDLTWEIFRDTLIEQAEQGVDYFTIHAGVRLQYVPLTANRMTGIVSRGGSIMAKWCLAHHKESFLYEHFEEICEIMKAYDVSFSLGDGLRPGSIYDANDEAQLGELKTLGELTQIAWKHDVQVMIEGPGHVPMQLIKENMDLQLDWCKEAPFYTLGPLTTDIAPGYDHITSGIGAAMIGWFGTAMLCYVTPKEHLGLPNKDDVKEGIITYKLAAHAADLAKGHPGAQVRDNALSKARFEFRWEDQFNIGLDPDKAREFHDETLPKDSAKVAHFCSMCGPHFCSMKITQDVREFAAQQGVSETEALKKGMEVKAVEFVKTGAEIYHRQ.

Residues Asn248, Met277, Tyr306, His342, 362–364 (SRG), 403–406 (DGLR), and Glu442 each bind substrate. His446 contacts Zn(2+). A substrate-binding site is contributed by Tyr469. Residue His510 participates in Zn(2+) binding. 3 residues coordinate [4Fe-4S] cluster: Cys590, Cys593, and Cys598.

The protein belongs to the ThiC family. In terms of assembly, homodimer. Requires [4Fe-4S] cluster as cofactor.

The enzyme catalyses 5-amino-1-(5-phospho-beta-D-ribosyl)imidazole + S-adenosyl-L-methionine = 4-amino-2-methyl-5-(phosphooxymethyl)pyrimidine + CO + 5'-deoxyadenosine + formate + L-methionine + 3 H(+). It participates in cofactor biosynthesis; thiamine diphosphate biosynthesis. In terms of biological role, catalyzes the synthesis of the hydroxymethylpyrimidine phosphate (HMP-P) moiety of thiamine from aminoimidazole ribotide (AIR) in a radical S-adenosyl-L-methionine (SAM)-dependent reaction. This Burkholderia orbicola (strain MC0-3) protein is Phosphomethylpyrimidine synthase.